The chain runs to 303 residues: Recombination-associated protein RdgC (303 aa).

This sequence belongs to the RdgC family.

Its subcellular location is the cytoplasm. It is found in the nucleoid. In terms of biological role, may be involved in recombination. This Shewanella sediminis (strain HAW-EB3) protein is Recombination-associated protein RdgC.